Reading from the N-terminus, the 320-residue chain is Agamous-like MADS-box protein AGL90 (320 aa).

The 59-residue stretch at 1–59 folds into the MADS-box domain; sequence MKKVKLSLIANERSRKTSFMKRKNGIFKKLHELSTLCGVQACALIYSPFIPVPESWPSR. Residues 80 to 115 are a coiled coil; the sequence is KMMDQETHLMERITKAKEQLKNLAAENRELQVRRFM.

In terms of assembly, interacts with AGL62.

The protein localises to the nucleus. Probable transcription factor. This is Agamous-like MADS-box protein AGL90 (AGL90) from Arabidopsis thaliana (Mouse-ear cress).